The following is a 223-amino-acid chain: Urease accessory protein UreF (223 aa).

The protein belongs to the UreF family. UreD, UreF and UreG form a complex that acts as a GTP-hydrolysis-dependent molecular chaperone, activating the urease apoprotein by helping to assemble the nickel containing metallocenter of UreC. The UreE protein probably delivers the nickel.

It localises to the cytoplasm. In terms of biological role, required for maturation of urease via the functional incorporation of the urease nickel metallocenter. This is Urease accessory protein UreF from Rhizobium etli (strain CIAT 652).